A 371-amino-acid polypeptide reads, in one-letter code: Histidinol-phosphate aminotransferase (371 aa).

Lys228 carries the post-translational modification N6-(pyridoxal phosphate)lysine.

The protein belongs to the class-II pyridoxal-phosphate-dependent aminotransferase family. Histidinol-phosphate aminotransferase subfamily. In terms of assembly, homodimer. Pyridoxal 5'-phosphate serves as cofactor.

It carries out the reaction L-histidinol phosphate + 2-oxoglutarate = 3-(imidazol-4-yl)-2-oxopropyl phosphate + L-glutamate. The protein operates within amino-acid biosynthesis; L-histidine biosynthesis; L-histidine from 5-phospho-alpha-D-ribose 1-diphosphate: step 7/9. This chain is Histidinol-phosphate aminotransferase, found in Thermosynechococcus vestitus (strain NIES-2133 / IAM M-273 / BP-1).